The chain runs to 252 residues: 4-hydroxy-tetrahydrodipicolinate reductase (252 aa).

An NAD(+)-binding site is contributed by 8–13 (GALGRM). Arginine 36 provides a ligand contact to NADP(+). NAD(+) is bound by residues 89-91 (GTT) and 114-117 (SSNF). Histidine 146 acts as the Proton donor/acceptor in catalysis. Histidine 147 contacts (S)-2,3,4,5-tetrahydrodipicolinate. The active-site Proton donor is the lysine 150. 156–157 (GT) contacts (S)-2,3,4,5-tetrahydrodipicolinate.

It belongs to the DapB family.

It is found in the cytoplasm. It carries out the reaction (S)-2,3,4,5-tetrahydrodipicolinate + NAD(+) + H2O = (2S,4S)-4-hydroxy-2,3,4,5-tetrahydrodipicolinate + NADH + H(+). The enzyme catalyses (S)-2,3,4,5-tetrahydrodipicolinate + NADP(+) + H2O = (2S,4S)-4-hydroxy-2,3,4,5-tetrahydrodipicolinate + NADPH + H(+). The protein operates within amino-acid biosynthesis; L-lysine biosynthesis via DAP pathway; (S)-tetrahydrodipicolinate from L-aspartate: step 4/4. Catalyzes the conversion of 4-hydroxy-tetrahydrodipicolinate (HTPA) to tetrahydrodipicolinate. The chain is 4-hydroxy-tetrahydrodipicolinate reductase from Methanoculleus marisnigri (strain ATCC 35101 / DSM 1498 / JR1).